Consider the following 135-residue polypeptide: NADH-quinone oxidoreductase subunit A (135 aa).

The next 3 membrane-spanning stretches (helical) occupy residues Y9–V29, V67–V87, and L97–I117.

It belongs to the complex I subunit 3 family. NDH-1 is composed of 14 different subunits. Subunits NuoA, H, J, K, L, M, N constitute the membrane sector of the complex.

The protein resides in the cell inner membrane. It carries out the reaction a quinone + NADH + 5 H(+)(in) = a quinol + NAD(+) + 4 H(+)(out). In terms of biological role, NDH-1 shuttles electrons from NADH, via FMN and iron-sulfur (Fe-S) centers, to quinones in the respiratory chain. The immediate electron acceptor for the enzyme in this species is believed to be ubiquinone. Couples the redox reaction to proton translocation (for every two electrons transferred, four hydrogen ions are translocated across the cytoplasmic membrane), and thus conserves the redox energy in a proton gradient. The chain is NADH-quinone oxidoreductase subunit A from Solibacter usitatus (strain Ellin6076).